A 571-amino-acid chain; its full sequence is Glutamate--tRNA ligase (571 aa).

Residues 75-88 show a composition bias toward basic and acidic residues; it reads GGPREDVARDKEGL. Positions 75–98 are disordered; that stretch reads GGPREDVARDKEGLKPLPGAEPGN. The 'HIGH' region motif lies at 105–115; the sequence is PNPSGPLHIGH.

This sequence belongs to the class-I aminoacyl-tRNA synthetase family. Glutamate--tRNA ligase type 2 subfamily.

It localises to the cytoplasm. It catalyses the reaction tRNA(Glu) + L-glutamate + ATP = L-glutamyl-tRNA(Glu) + AMP + diphosphate. Functionally, catalyzes the attachment of glutamate to tRNA(Glu) in a two-step reaction: glutamate is first activated by ATP to form Glu-AMP and then transferred to the acceptor end of tRNA(Glu). The protein is Glutamate--tRNA ligase of Methanopyrus kandleri (strain AV19 / DSM 6324 / JCM 9639 / NBRC 100938).